The chain runs to 180 residues: Large ribosomal subunit protein uL5 (180 aa).

The protein belongs to the universal ribosomal protein uL5 family. Part of the 50S ribosomal subunit; part of the 5S rRNA/L5/L18/L25 subcomplex. Contacts the 5S rRNA and the P site tRNA. Forms a bridge to the 30S subunit in the 70S ribosome.

In terms of biological role, this is one of the proteins that bind and probably mediate the attachment of the 5S RNA into the large ribosomal subunit, where it forms part of the central protuberance. In the 70S ribosome it contacts protein S13 of the 30S subunit (bridge B1b), connecting the 2 subunits; this bridge is implicated in subunit movement. Contacts the P site tRNA; the 5S rRNA and some of its associated proteins might help stabilize positioning of ribosome-bound tRNAs. This is Large ribosomal subunit protein uL5 from Lactobacillus acidophilus (strain ATCC 700396 / NCK56 / N2 / NCFM).